Consider the following 143-residue polypeptide: Phosphatidylethanolamine-binding protein homolog R644 (143 aa).

This sequence belongs to the phosphatidylethanolamine-binding protein family.

It localises to the virion. This Acanthamoeba polyphaga mimivirus (APMV) protein is Phosphatidylethanolamine-binding protein homolog R644.